The primary structure comprises 432 residues: Protein arginine N-methyltransferase 2 (432 aa).

Residues 1 to 11 are compositionally biased toward low complexity; that stretch reads MESSSECSSIS. The segment at 1–22 is disordered; that stretch reads MESSSECSSISDFQDSTEGDDA. The SH3 domain occupies 29-88; that stretch reads LCMREYVVICDYVATDNTQLSLCSGDKVLLLNAVSQDWWWVNHNGTCGYVPASHLHDALN. One can recognise an SAM-dependent MTase PRMT-type domain in the interval 101 to 405; that stretch reads DEEYYGSYKT…FERNSVWRRH (305 aa). S-adenosyl-L-methionine-binding residues include H114, R123, G147, E170, and E199. Residues E213 and E222 contribute to the active site.

This sequence belongs to the class I-like SAM-binding methyltransferase superfamily. Protein arginine N-methyltransferase family. Interacts with ctnnb1.

The protein resides in the cytoplasm. It localises to the nucleus. It carries out the reaction L-arginyl-[protein] + 2 S-adenosyl-L-methionine = N(omega),N(omega)-dimethyl-L-arginyl-[protein] + 2 S-adenosyl-L-homocysteine + 2 H(+). Arginine methyltransferase that methylates the guanidino nitrogens of arginyl residues in proteins such as histones. Involved in growth regulation. Involved in embryonic dorsal development. In Xenopus laevis (African clawed frog), this protein is Protein arginine N-methyltransferase 2 (prmt2).